A 695-amino-acid chain; its full sequence is Elongation factor G (695 aa).

The region spanning 5-280 (SHYRNIGIFA…AVIDFLPSPT (276 aa)) is the tr-type G domain. Residues 14-21 (AHVDAGKT), 78-82 (DTPGH), and 132-135 (NKLD) contribute to the GTP site. The segment at 279–299 (PTEVDPQPLTDEETGEPTGEV) is disordered.

It belongs to the TRAFAC class translation factor GTPase superfamily. Classic translation factor GTPase family. EF-G/EF-2 subfamily.

It localises to the cytoplasm. Catalyzes the GTP-dependent ribosomal translocation step during translation elongation. During this step, the ribosome changes from the pre-translocational (PRE) to the post-translocational (POST) state as the newly formed A-site-bound peptidyl-tRNA and P-site-bound deacylated tRNA move to the P and E sites, respectively. Catalyzes the coordinated movement of the two tRNA molecules, the mRNA and conformational changes in the ribosome. This Alteromonas mediterranea (strain DSM 17117 / CIP 110805 / LMG 28347 / Deep ecotype) protein is Elongation factor G.